Here is a 164-residue protein sequence, read N- to C-terminus: Transcription antitermination protein NusB (164 aa).

The protein belongs to the NusB family.

Functionally, involved in transcription antitermination. Required for transcription of ribosomal RNA (rRNA) genes. Binds specifically to the boxA antiterminator sequence of the ribosomal RNA (rrn) operons. The chain is Transcription antitermination protein NusB from Chlorobium limicola (strain DSM 245 / NBRC 103803 / 6330).